The primary structure comprises 217 residues: MOB kinase activator 3A (217 aa).

4 residues coordinate Zn(2+): Cys-83, Cys-88, His-165, and His-170.

This sequence belongs to the MOB1/phocein family.

In terms of biological role, may regulate the activity of kinases. This Homo sapiens (Human) protein is MOB kinase activator 3A (MOB3A).